Here is a 243-residue protein sequence, read N- to C-terminus: MSVPTITYENFEGDPFIDSISTDDATKGAYEILEWAYRTYGDSIVYSCSFGAESMVLIDLIYQIKPDAQIVFLDTDLHFQETYDLIDRVKEHFPKLRIEMKKPDLTLEEQADKYNPALWKNNPNQCCYIRKIKPLEEVLGGAVAWVSGLRRDQSPTRANTNFINKDERFKSVKVCPLIYWTEDEVWDYIKKHDLPYNALHDQHYPSIGCIPCTAPVFDSEDSRAGRWSNFDKTECGLHVADKP.

It belongs to the PAPS reductase family. CysH subfamily. [4Fe-4S] cluster serves as cofactor.

The protein resides in the cytoplasm. It catalyses the reaction [thioredoxin]-disulfide + sulfite + AMP + 2 H(+) = adenosine 5'-phosphosulfate + [thioredoxin]-dithiol. It participates in sulfur metabolism; hydrogen sulfide biosynthesis; sulfite from sulfate. Catalyzes the formation of sulfite from adenosine 5'-phosphosulfate (APS) using thioredoxin as an electron donor. This Staphylococcus haemolyticus (strain JCSC1435) protein is Adenosine 5'-phosphosulfate reductase.